Reading from the N-terminus, the 329-residue chain is MGRAPCCDKTKVKRGPWSPEEDSKLRDYIEKYGNGGNWISFPLKAGLRRCGKSCRLRWLNYLRPNIKHGDFSEEEDRIIFSLFAAIGSRWSIIAAHLPGRTDNDIKNYWNTKLRKKLLSSSSDSSSSAMASPYLNPISQDVKRPTSPTTIPSSSYNPYAENPNQYPTKSLISSINGFEAGDKQIISYINPNYPQDLYLSDSNNNTSNANGFLLNHNMCDQYKNHTSFSSDVNGIRSEIMMKQEEIMMMMMIDHHIDQRTKGYNGEFTQGYYNYYNGHGDLKQMISGTGTNSNINMGGSGSSSSSISNLAENKSSGSLLLEYKCLPYFYS.

2 consecutive HTH myb-type domains span residues 9 to 62 and 63 to 117; these read KTKV…LNYL and RPNI…RKKL. 2 DNA-binding regions (H-T-H motif) span residues 38–62 and 90–113; these read WISF…LNYL and WSII…NTKL. Low complexity-rich tracts occupy residues 122–131 and 144–154; these read SDSSSSAMAS and PTSPTTIPSSS. Residues 122–162 are disordered; sequence SDSSSSAMASPYLNPISQDVKRPTSPTTIPSSSYNPYAENP.

As to expression, mostly expressed in roots. Also present in shoot tips and flower buds.

It localises to the nucleus. Functionally, transcription activator of genes involved in the regulation of meristematic competence, such as CUC2. Positively regulates axillary meristems (AMs) formation and development, especially at early phases of vegetative growth, probably by specifying a stem cell niche for AM formation. Modulates the negative regulation mediated by gibberellic acid on the timing of developmental phase transitions. The polypeptide is Transcription factor RAX1 (RAX1) (Arabidopsis thaliana (Mouse-ear cress)).